The chain runs to 638 residues: Chaperone protein DnaK (638 aa).

A Phosphothreonine; by autocatalysis modification is found at threonine 199. A disordered region spans residues glutamate 600 to lysine 638. Residues asparagine 602 to asparagine 624 are compositionally biased toward basic and acidic residues.

Belongs to the heat shock protein 70 family.

Functionally, acts as a chaperone. The chain is Chaperone protein DnaK from Buchnera aphidicola subsp. Schizaphis graminum (strain Sg).